The chain runs to 256 residues: Major prion protein (256 aa).

Residues 1 to 24 (MVKSHIGSWILVLFVAMWSDVGLC) form the signal peptide. Positions 25–233 (KKRPKPGGGW…ESQAYYQRGA (209 aa)) are interaction with GRB2, ERI3 and SYN1. Residues 28–110 (PKPGGGWNTG…QWNKPSKPKT (83 aa)) form a disordered region. 5 repeat units span residues 54 to 62 (PQGGGGWGQ), 63 to 70 (PHGGGWGQ), 71 to 78 (PHGGGWGQ), 79 to 86 (PHGGGWGQ), and 87 to 95 (PHGGGGWGQ). Residues 54 to 95 (PQGGGGWGQPHGGGWGQPHGGGWGQPHGGGWGQPHGGGGWGQ) are 5 X 8 AA tandem repeats of P-H-G-G-G-W-G-Q. The segment covering 55–97 (QGGGGWGQPHGGGWGQPHGGGWGQPHGGGWGQPHGGGGWGQGG) has biased composition (gly residues). Residues His-64, Gly-65, Gly-66, His-72, Gly-73, Gly-74, His-80, Gly-81, Gly-82, His-88, Gly-90, and Gly-91 each coordinate Cu(2+). A disulfide bridge connects residues Cys-182 and Cys-217. N-linked (GlcNAc...) asparagine glycosylation is found at Asn-184 and Asn-200. Ala-233 carries GPI-anchor amidated alanine lipidation. The propeptide at 234–256 (SVILFSSPPVILLISFLIFLIVG) is removed in mature form.

The protein belongs to the prion family. As to quaternary structure, monomer and homodimer. Has a tendency to aggregate into amyloid fibrils containing a cross-beta spine, formed by a steric zipper of superposed beta-strands. Soluble oligomers may represent an intermediate stage on the path to fibril formation. Copper binding may promote oligomerization. Interacts with GRB2, APP, ERI3/PRNPIP and SYN1. Mislocalized cytosolically exposed PrP interacts with MGRN1; this interaction alters MGRN1 subcellular location and causes lysosomal enlargement. Interacts with KIAA1191.

It localises to the cell membrane. The protein resides in the golgi apparatus. Its primary physiological function is unclear. Has cytoprotective activity against internal or environmental stresses. May play a role in neuronal development and synaptic plasticity. May be required for neuronal myelin sheath maintenance. May play a role in iron uptake and iron homeostasis. Soluble oligomers are toxic to cultured neuroblastoma cells and induce apoptosis (in vitro). Association with GPC1 (via its heparan sulfate chains) targets PRNP to lipid rafts. Also provides Cu(2+) or Zn(2+) for the ascorbate-mediated GPC1 deaminase degradation of its heparan sulfate side chains. The sequence is that of Major prion protein (PRNP) from Ovis canadensis (Bighorn sheep).